The primary structure comprises 162 residues: Caveolin-2 (162 aa).

Residues M1 to K86 are Cytoplasmic-facing. Position 19 is a phosphotyrosine; by SRC (Y19). 2 positions are modified to phosphoserine: S20 and S23. Phosphotyrosine; by SRC is present on Y27. The residue at position 36 (S36) is a Phosphoserine. Residues F87–L107 constitute an intramembrane region (helical). Topologically, residues S108 to D162 are cytoplasmic.

Belongs to the caveolin family. In terms of assembly, monomer or homodimer. Interacts with CAV1; the interaction forms a stable heterooligomeric complex that is required for targeting to lipid rafts and for caveolae formation. Tyrosine phosphorylated forms do not form heterooligomers with the Tyr-19-phosphorylated form existing as a monomer or dimer, and the Tyr-27-form as a monomer only. Interacts (tyrosine phosphorylated form) with the SH2 domain-containing proteins, RASA1, NCK1 and SRC. Interacts (tyrosine phosphorylated form) with INSR, the interaction (Tyr-27-phosphorylated form) is increased on insulin stimulation. Interacts (Tyr-19 phosphorylated form) with MAPK1 (phosphorylated form); the interaction, promoted by insulin, leads to nuclear location and MAPK1 activation. Interacts with STAT3; the interaction is increased on insulin-induced tyrosine phosphorylation leading to STAT activation. Post-translationally, phosphorylated on serine and tyrosine residues. CAV1 promotes phosphorylation on Ser-23 which then targets the complex to the plasma membrane, lipid rafts and caveolae. Phosphorylation on Ser-36 appears to modulate mitosis in endothelial cells. Phosphorylation on both Tyr-19 and Tyr-27 is required for insulin-induced 'Ser-727' phosphorylation of STAT3 and its activation. Phosphorylation on Tyr-19 is required for insulin-induced phosphorylation of MAPK1 and DNA binding of STAT3. Tyrosine phosphorylation is induced by both EGF and insulin (By. similarity).

It localises to the nucleus. The protein resides in the cytoplasm. The protein localises to the golgi apparatus membrane. It is found in the cell membrane. Its subcellular location is the membrane. It localises to the caveola. Its function is as follows. May act as a scaffolding protein within caveolar membranes. Interacts directly with G-protein alpha subunits and can functionally regulate their activity. Acts as an accessory protein in conjunction with CAV1 in targeting to lipid rafts and driving caveolae formation. The Ser-36 phosphorylated form has a role in modulating mitosis in endothelial cells. Positive regulator of cellular mitogenesis of the MAPK signaling pathway. Required for the insulin-stimulated nuclear translocation and activation of MAPK1 and STAT3, and the subsequent regulation of cell cycle progression. This chain is Caveolin-2 (CAV2), found in Mustela putorius furo (European domestic ferret).